The following is a 183-amino-acid chain: ATP synthase subunit delta (183 aa).

This sequence belongs to the ATPase delta chain family. F-type ATPases have 2 components, F(1) - the catalytic core - and F(0) - the membrane proton channel. F(1) has five subunits: alpha(3), beta(3), gamma(1), delta(1), epsilon(1). F(0) has three main subunits: a(1), b(2) and c(10-14). The alpha and beta chains form an alternating ring which encloses part of the gamma chain. F(1) is attached to F(0) by a central stalk formed by the gamma and epsilon chains, while a peripheral stalk is formed by the delta and b chains.

It is found in the cell inner membrane. In terms of biological role, f(1)F(0) ATP synthase produces ATP from ADP in the presence of a proton or sodium gradient. F-type ATPases consist of two structural domains, F(1) containing the extramembraneous catalytic core and F(0) containing the membrane proton channel, linked together by a central stalk and a peripheral stalk. During catalysis, ATP synthesis in the catalytic domain of F(1) is coupled via a rotary mechanism of the central stalk subunits to proton translocation. Its function is as follows. This protein is part of the stalk that links CF(0) to CF(1). It either transmits conformational changes from CF(0) to CF(1) or is implicated in proton conduction. This is ATP synthase subunit delta from Desulforapulum autotrophicum (strain ATCC 43914 / DSM 3382 / VKM B-1955 / HRM2) (Desulfobacterium autotrophicum).